A 217-amino-acid chain; its full sequence is MNLILMGLPGAGKGTQAEKIIEKYGIPHISTGDMFRAAMKNETELGLKAKSYMDAGELVPDEVTIGIVRDRLSQDDCQNGFLLDGFPRTVAQAEALEDILASLDKKLDYVINIDVPEQLLMDRLTGRRVSPTSGRTYHVIFNPPKVEGICDVDGSELIQRDDDKPETVKKRLEVNQKQAQPLIDFYSEKGYLQNINGDQDISRVFEDINELLKGLSS.

10-15 (GAGKGT) contacts ATP. An NMP region spans residues 30-59 (STGDMFRAAMKNETELGLKAKSYMDAGELV). AMP is bound by residues threonine 31, arginine 36, 57–59 (ELV), 85–88 (GFPR), and glutamine 92. Residues 126–163 (GRRVSPTSGRTYHVIFNPPKVEGICDVDGSELIQRDDD) are LID. Residues arginine 127 and 136–137 (TY) contribute to the ATP site. Residues arginine 160 and arginine 171 each contribute to the AMP site. Glutamine 199 contacts ATP.

This sequence belongs to the adenylate kinase family. As to quaternary structure, monomer.

It is found in the cytoplasm. The enzyme catalyses AMP + ATP = 2 ADP. It functions in the pathway purine metabolism; AMP biosynthesis via salvage pathway; AMP from ADP: step 1/1. Its function is as follows. Catalyzes the reversible transfer of the terminal phosphate group between ATP and AMP. Plays an important role in cellular energy homeostasis and in adenine nucleotide metabolism. The protein is Adenylate kinase of Halalkalibacterium halodurans (strain ATCC BAA-125 / DSM 18197 / FERM 7344 / JCM 9153 / C-125) (Bacillus halodurans).